Here is a 126-residue protein sequence, read N- to C-terminus: Large ribosomal subunit protein bL12 (126 aa).

Belongs to the bacterial ribosomal protein bL12 family. In terms of assembly, homodimer. Part of the ribosomal stalk of the 50S ribosomal subunit. Forms a multimeric L10(L12)X complex, where L10 forms an elongated spine to which 2 to 4 L12 dimers bind in a sequential fashion. Binds GTP-bound translation factors.

Its function is as follows. Forms part of the ribosomal stalk which helps the ribosome interact with GTP-bound translation factors. Is thus essential for accurate translation. This chain is Large ribosomal subunit protein bL12, found in Bifidobacterium longum (strain DJO10A).